The following is a 393-amino-acid chain: S-adenosylmethionine synthase 1 (393 aa).

Position 9 (E9) interacts with Mg(2+). An ATP-binding site is contributed by H15. E43 serves as a coordination point for K(+). Positions 56 and 99 each coordinate L-methionine. Residues 167–169 (DGK), 235–238 (SGRF), D246, 252–253 (RK), A269, K273, and K277 contribute to the ATP site. D246 is a binding site for L-methionine. K277 contributes to the L-methionine binding site.

It belongs to the AdoMet synthase family. In terms of assembly, homotetramer. Mn(2+) is required as a cofactor. Requires Mg(2+) as cofactor. The cofactor is Co(2+). K(+) serves as cofactor.

It localises to the cytoplasm. It catalyses the reaction L-methionine + ATP + H2O = S-adenosyl-L-methionine + phosphate + diphosphate. Its pathway is amino-acid biosynthesis; S-adenosyl-L-methionine biosynthesis; S-adenosyl-L-methionine from L-methionine: step 1/1. Functionally, catalyzes the formation of S-adenosylmethionine from methionine and ATP. The reaction comprises two steps that are both catalyzed by the same enzyme: formation of S-adenosylmethionine (AdoMet) and triphosphate, and subsequent hydrolysis of the triphosphate. This is S-adenosylmethionine synthase 1 (SAMS1) from Brassica juncea (Indian mustard).